The primary structure comprises 195 residues: Thymidine kinase (195 aa).

Residues 15–22 (GSMFSGKS) and 88–91 (DEVQ) each bind ATP. The Proton acceptor role is filled by Glu89. Zn(2+) contacts are provided by Cys145, Cys148, Cys183, and Cys186.

Belongs to the thymidine kinase family. Homotetramer.

The protein localises to the cytoplasm. The catalysed reaction is thymidine + ATP = dTMP + ADP + H(+). The protein is Thymidine kinase of Bacillus cereus (strain ZK / E33L).